The chain runs to 90 residues: Photosystem I reaction center subunit PsaK 2 (90 aa).

The next 2 helical transmembrane spans lie at Leu-20 to Gln-42 and Leu-67 to Ile-89.

This sequence belongs to the PsaG/PsaK family.

The protein localises to the cellular thylakoid membrane. The sequence is that of Photosystem I reaction center subunit PsaK 2 (psaK2) from Synechocystis sp. (strain ATCC 27184 / PCC 6803 / Kazusa).